Here is a 57-residue protein sequence, read N- to C-terminus: Large ribosomal subunit protein bL32 (57 aa).

It belongs to the bacterial ribosomal protein bL32 family.

The polypeptide is Large ribosomal subunit protein bL32 (Geobacillus sp. (strain WCH70)).